The sequence spans 554 residues: Muellerian-inhibiting factor (554 aa).

The first 24 residues, 1–24, serve as a signal peptide directing secretion; it reads MQGPHLSPLVLLLATMGAVLQPEA. Residues 25-446 constitute a propeptide that is removed on maturation; sequence VENLATNTRG…GREGRGRTGR (422 aa). 3 N-linked (GlcNAc...) asparagine glycosylation sites follow: N62, N326, and N410. 3 cysteine pairs are disulfide-bonded: C456-C520, C482-C551, and C486-C553.

The protein belongs to the TGF-beta family. Homodimer; disulfide-linked. Preproprotein is proteolytically processed to generate N- and C-terminal cleavage products that homodimerize and associate to form a biologically active non-covalent complex. Binding of the non-covalent complex to AMHRII induces dissociation of the pro-region from the mature C-terminal dimer. The N-terminal portion of the protein, despite having no intrinsic activity, has the role of amplifying the activity of the C-terminus. In terms of tissue distribution, expressed in Sertoli cells of fetal testes, and in testes just after birth, but absent in adult testes. In female, AMH is expressed after birth in the granulosa cells of the follicle.

It is found in the secreted. In terms of biological role, plays an important role in several reproductive functions, including Muellerian duct regression during male fetal sexua,l differentiation and in the adult plays a role in Leydig cell differentiation and function. In female acts as a negative regulator of the primordial to primary follicle transition and decreases FSH sensitivity of growing follicles. Binds to its sole type II receptor, AMHR2 that recruits type I receptors ACVR1 and BMPR1A which subsequently activates the Smad pathway. In Mus musculus (Mouse), this protein is Muellerian-inhibiting factor (Amh).